Here is a 333-residue protein sequence, read N- to C-terminus: Gap junction alpha-4 protein (333 aa).

The Cytoplasmic portion of the chain corresponds to 1–20 (MGDWGFLEKLLDQVQEHSTV). A helical transmembrane segment spans residues 21-40 (VGKIWLTVLFIFRILILGLA). The Extracellular segment spans residues 41–76 (GESVWGDEQSDFECNTAQPGCTNVCYDQAFPISHIR). A helical membrane pass occupies residues 77–99 (YWVLQFLFVSTPTLIYLGHVIYL). Topologically, residues 100–148 (SRREERLRQKEGELRALPSKDLHVERALAAIEHQMAKISVAEDGRLRIR) are cytoplasmic. A helical transmembrane segment spans residues 149–171 (GALMGTYVVSVLCKSVLEAGFLY). The Extracellular portion of the chain corresponds to 172-208 (GQWRLYGWTMEPVFVCQRAPCPHIVDCYVSRPTEKTI). Residues 209 to 231 (FIIFMLVVGVISLVLNLLELVHL) form a helical membrane-spanning segment. Residues 232-333 (LCRCVSREIK…NSSASKKQYV (102 aa)) lie on the Cytoplasmic side of the membrane. A disordered region spans residues 292 to 333 (ANLTTEERLTSSRPPPFVNTAPQGGRKSPSRPNSSASKKQYV). The span at 321-333 (SRPNSSASKKQYV) shows a compositional bias: polar residues.

This sequence belongs to the connexin family. Alpha-type (group II) subfamily. A connexon is composed of a hexamer of connexins. Highly expressed in lung.

It is found in the cell membrane. It localises to the cell junction. The protein resides in the gap junction. One gap junction consists of a cluster of closely packed pairs of transmembrane channels, the connexons, through which materials of low MW diffuse from one cell to a neighboring cell. The protein is Gap junction alpha-4 protein (Gja4) of Mus musculus (Mouse).